Reading from the N-terminus, the 523-residue chain is GMP synthase [glutamine-hydrolyzing] (523 aa).

The 190-residue stretch at 9 to 198 (PVLVVDFGAQ…LTEIAGLEQN (190 aa)) folds into the Glutamine amidotransferase type-1 domain. Residue Cys86 is the Nucleophile of the active site. Active-site residues include His172 and Glu174. The GMPS ATP-PPase domain occupies 199–397 (WTAANIAEEL…LGLPEEIVGR (199 aa)). Residue 227–233 (SGGVDSA) participates in ATP binding.

In terms of assembly, homodimer.

The enzyme catalyses XMP + L-glutamine + ATP + H2O = GMP + L-glutamate + AMP + diphosphate + 2 H(+). It participates in purine metabolism; GMP biosynthesis; GMP from XMP (L-Gln route): step 1/1. In terms of biological role, catalyzes the synthesis of GMP from XMP. The chain is GMP synthase [glutamine-hydrolyzing] from Corynebacterium glutamicum (strain ATCC 13032 / DSM 20300 / JCM 1318 / BCRC 11384 / CCUG 27702 / LMG 3730 / NBRC 12168 / NCIMB 10025 / NRRL B-2784 / 534).